Consider the following 407-residue polypeptide: Guanine nucleotide-binding protein alpha-1 subunit (407 aa).

Residue Gly-2 is the site of N-myristoyl glycine attachment. A lipid anchor (S-palmitoyl cysteine) is attached at Cys-3. One can recognise a G-alpha domain in the interval 73–407; sequence NDIKVLLLGA…MSNNLQSLMF (335 aa). The tract at residues 76–89 is G1 motif; that stretch reads KVLLLGAGDSGKTT. Residues Asp-84, Ser-85, Gly-86, Lys-87, Thr-88, Thr-89, Asp-190, Leu-215, Thr-221, Gly-243, Asn-309, Lys-310, Asp-312, and Ala-380 each coordinate GTP. Thr-88 contacts Mg(2+). Positions 213 to 221 are G2 motif; the sequence is DILHCRIKT. Thr-221 contacts Mg(2+). The G3 motif stretch occupies residues 236–245; sequence YRFFDVGGQR. The interval 305–312 is G4 motif; it reads ILFLNKLD. A G5 motif region spans residues 378-383; sequence TTATDT.

Belongs to the G-alpha family. G(q) subfamily. G proteins are composed of 3 units; alpha, beta and gamma. The alpha chain contains the guanine nucleotide binding site. Mg(2+) is required as a cofactor.

Its function is as follows. Implicated in the mating and sporulation pathway. Probably coupled to mating-factor receptors. May act in concert with Ras1. The sequence is that of Guanine nucleotide-binding protein alpha-1 subunit (gpa1) from Schizosaccharomyces pombe (strain 972 / ATCC 24843) (Fission yeast).